Here is an 85-residue protein sequence, read N- to C-terminus: Conotoxin Mi15a (85 aa).

Positions 1 to 23 (MEKLTVLILVATVLLTIQVLGQS) are cleaved as a signal peptide. Residues 24-49 (DRDKHLKRRPKQYATKRLSARMRGHR) constitute a propeptide that is removed on maturation. Pyrrolidone carboxylic acid is present on glutamine 50.

This sequence belongs to the conotoxin O2 superfamily. In terms of processing, contains 4 disulfide bonds. In terms of tissue distribution, expressed by the venom duct.

The protein resides in the secreted. The polypeptide is Conotoxin Mi15a (Conus miles (Soldier cone)).